The following is a 304-amino-acid chain: Ribonuclease Z (304 aa).

7 residues coordinate Zn(2+): histidine 64, histidine 66, aspartate 68, histidine 69, histidine 141, aspartate 209, and histidine 267. Aspartate 68 acts as the Proton acceptor in catalysis.

Belongs to the RNase Z family. As to quaternary structure, homodimer. It depends on Zn(2+) as a cofactor.

It carries out the reaction Endonucleolytic cleavage of RNA, removing extra 3' nucleotides from tRNA precursor, generating 3' termini of tRNAs. A 3'-hydroxy group is left at the tRNA terminus and a 5'-phosphoryl group is left at the trailer molecule.. In terms of biological role, zinc phosphodiesterase, which displays some tRNA 3'-processing endonuclease activity. Probably involved in tRNA maturation, by removing a 3'-trailer from precursor tRNA. The sequence is that of Ribonuclease Z from Thermoplasma volcanium (strain ATCC 51530 / DSM 4299 / JCM 9571 / NBRC 15438 / GSS1).